A 188-amino-acid chain; its full sequence is Ribosome-recycling factor (188 aa).

The protein belongs to the RRF family.

It is found in the cytoplasm. Its function is as follows. Responsible for the release of ribosomes from messenger RNA at the termination of protein biosynthesis. May increase the efficiency of translation by recycling ribosomes from one round of translation to another. In Caulobacter sp. (strain K31), this protein is Ribosome-recycling factor.